Here is a 295-residue protein sequence, read N- to C-terminus: Ubiquitin-conjugating enzyme E2-34 kDa (295 aa).

A UBC core domain is found at 7-169 (TASSLLLRQY…VKMEVERSKQ (163 aa)). Cysteine 95 acts as the Glycyl thioester intermediate in catalysis. The disordered stretch occupies residues 185 to 295 (ISQSKLDEPE…EDVERVSKKI (111 aa)). At serine 186 the chain carries Phosphoserine. Positions 189–200 (KLDEPESNKDMA) are enriched in basic and acidic residues. Composition is skewed to acidic residues over residues 207-226 (SDLD…DYDD) and 234-265 (EDDD…DSID). Residues 269–279 (VMDRKQPHKAE) show a composition bias toward basic and acidic residues. A phosphoserine mark is found at serine 282 and serine 292.

The protein belongs to the ubiquitin-conjugating enzyme family. In terms of assembly, interacts with CDC53. Component of the E3 ubiquitin ligase complexes SCF with CDC53, SKP1/CBF3D, HRT1 and some F-box proteins like MET30 and CDC4.

It is found in the cytoplasm. It localises to the nucleus. The catalysed reaction is S-ubiquitinyl-[E1 ubiquitin-activating enzyme]-L-cysteine + [E2 ubiquitin-conjugating enzyme]-L-cysteine = [E1 ubiquitin-activating enzyme]-L-cysteine + S-ubiquitinyl-[E2 ubiquitin-conjugating enzyme]-L-cysteine.. It participates in protein modification; protein ubiquitination. In terms of biological role, catalyzes the covalent attachment of ubiquitin to other proteins. Capable, in vitro, to ubiquitinate histone H2A. Functionally, mediates the initiation of DNA replication (transition of G1 to S phase in cell cycle). Essential component of the E3 ubiquitin ligase complex SCF (SKP1-CUL1-F-box protein), which mediates the ubiquitination and subsequent proteasomal degradation of target proteins. Involved in the regulation of methionine biosynthesis genes and in the degradation of CDC6 together with CDC4 and CDC53. The chain is Ubiquitin-conjugating enzyme E2-34 kDa (CDC34) from Saccharomyces cerevisiae (strain ATCC 204508 / S288c) (Baker's yeast).